We begin with the raw amino-acid sequence, 282 residues long: UPF0761 membrane protein HAPS_1376 (282 aa).

A run of 6 helical transmembrane segments spans residues L32–F52, M89–D109, V124–A144, L170–V190, V202–I222, and A234–L254.

It belongs to the UPF0761 family.

The protein resides in the cell inner membrane. The chain is UPF0761 membrane protein HAPS_1376 from Glaesserella parasuis serovar 5 (strain SH0165) (Haemophilus parasuis).